Reading from the N-terminus, the 151-residue chain is 3-hydroxyacyl-[acyl-carrier-protein] dehydratase FabZ (151 aa).

His54 is a catalytic residue.

The protein belongs to the thioester dehydratase family. FabZ subfamily.

It localises to the cytoplasm. It catalyses the reaction a (3R)-hydroxyacyl-[ACP] = a (2E)-enoyl-[ACP] + H2O. Involved in unsaturated fatty acids biosynthesis. Catalyzes the dehydration of short chain beta-hydroxyacyl-ACPs and long chain saturated and unsaturated beta-hydroxyacyl-ACPs. This is 3-hydroxyacyl-[acyl-carrier-protein] dehydratase FabZ from Salmonella agona (strain SL483).